A 210-amino-acid polypeptide reads, in one-letter code: MNDKNTLKGTTTVGITCKDGVVFATERRASMGNLIAHKATDKIFKIDEHIAATIAGSVADAQSLMKYLKAEAALYRMRNSEKISIEAAAALAANILHSSRFYPFIVQTLLGGVDENGAKIYSLDPSGGMIPDKFVSTGSGSPVAYGVLEDRYSDELYVDEAVDVAIRAIKSAMERDTYSGNGILVATVTEEEGFRMLSEEEIQKRIENLN.

Positions 1-9 (MNDKNTLKG) are cleaved as a propeptide — removed in mature form; by autocatalysis. Thr10 functions as the Nucleophile in the catalytic mechanism.

Belongs to the peptidase T1B family. The 20S proteasome core is composed of 14 alpha and 14 beta subunits that assemble into four stacked heptameric rings, resulting in a barrel-shaped structure. The two inner rings, each composed of seven catalytic beta subunits, are sandwiched by two outer rings, each composed of seven alpha subunits. The catalytic chamber with the active sites is on the inside of the barrel. Has a gated structure, the ends of the cylinder being occluded by the N-termini of the alpha-subunits. Is capped at one or both ends by the proteasome regulatory ATPase, PAN.

Its subcellular location is the cytoplasm. The catalysed reaction is Cleavage of peptide bonds with very broad specificity.. With respect to regulation, the formation of the proteasomal ATPase PAN-20S proteasome complex, via the docking of the C-termini of PAN into the intersubunit pockets in the alpha-rings, triggers opening of the gate for substrate entry. Interconversion between the open-gate and close-gate conformations leads to a dynamic regulation of the 20S proteasome proteolysis activity. In terms of biological role, component of the proteasome core, a large protease complex with broad specificity involved in protein degradation. This is Proteasome subunit beta from Methanothermobacter thermautotrophicus (strain ATCC 29096 / DSM 1053 / JCM 10044 / NBRC 100330 / Delta H) (Methanobacterium thermoautotrophicum).